An 814-amino-acid polypeptide reads, in one-letter code: Immunoglobulin superfamily DCC subclass member 3 (814 aa).

The signal sequence occupies residues 1–35 (MAVQRAASPRRPPAPLWPRLLLPLLLLLLPAPSEG). 4 consecutive Ig-like C2-type domains span residues 36–139 (LGHS…ATMS), 140–220 (DFHV…IRIS), 238–321 (PAIL…RTAQ), and 329–416 (PAEF…ARLT). Disulfide bonds link Cys63–Cys117 and Cys160–Cys209. The N-linked (GlcNAc...) asparagine glycan is linked to Asn93. Asn246 carries N-linked (GlcNAc...) asparagine glycosylation. 2 disulfides stabilise this stretch: Cys259/Cys307 and Cys351/Cys400. 2 N-linked (GlcNAc...) asparagine glycosylation sites follow: Asn381 and Asn382. Fibronectin type-III domains follow at residues 426-520 (PPRN…TLGE) and 523-618 (APPP…ASER). Asn580, Asn604, and Asn634 each carry an N-linked (GlcNAc...) asparagine glycan. A helical transmembrane segment spans residues 641–661 (IVIGIHIGVTCIIFCVLFLLF). 2 disordered regions span residues 722 to 743 (PPAS…APAP) and 762 to 814 (GKTT…HSEQ). Residues 770–781 (TEATAPCAGLAA) show a composition bias toward low complexity.

Belongs to the immunoglobulin superfamily. DCC family.

The protein localises to the membrane. This Homo sapiens (Human) protein is Immunoglobulin superfamily DCC subclass member 3 (IGDCC3).